The primary structure comprises 326 residues: tRNA-modifying protein YgfZ (326 aa).

Folate contacts are provided by tryptophan 27 and tryptophan 189.

It belongs to the tRNA-modifying YgfZ family.

The protein resides in the cytoplasm. Functionally, folate-binding protein involved in regulating the level of ATP-DnaA and in the modification of some tRNAs. It is probably a key factor in regulatory networks that act via tRNA modification, such as initiation of chromosomal replication. This is tRNA-modifying protein YgfZ from Shigella sonnei (strain Ss046).